We begin with the raw amino-acid sequence, 219 residues long: MRSFGRTGGRPLSPRQKTLMAEKLDTYRIAEGDGPLDLCAMFPGKEAFWLEIGFGGAEHMIAQAAQNPDVGIIGCEPFLEGIAKALGGIEETDLNNVRVWPDDARPLIARMPDQCLDRAFVLFPDPWPKRRQHKRRLVQADFLSILHPKMKPGARLRFATDVKSYADEALLTFVSDGRFEWLAASPDDWRCPPQDHVTTRYESKRLGDCKPVWFDFRIR.

S-adenosyl-L-methionine is bound by residues Glu51, Glu76, Asp103, and Asp125. Residue Asp125 is part of the active site. Substrate is bound by residues Lys129, Asp161, and 199-202; that span reads TRYE.

It belongs to the class I-like SAM-binding methyltransferase superfamily. TrmB family.

The catalysed reaction is guanosine(46) in tRNA + S-adenosyl-L-methionine = N(7)-methylguanosine(46) in tRNA + S-adenosyl-L-homocysteine. The protein operates within tRNA modification; N(7)-methylguanine-tRNA biosynthesis. Catalyzes the formation of N(7)-methylguanine at position 46 (m7G46) in tRNA. The sequence is that of tRNA (guanine-N(7)-)-methyltransferase from Hyphomonas neptunium (strain ATCC 15444).